Here is a 111-residue protein sequence, read N- to C-terminus: Ig heavy chain V-III region HPC76 (111 aa).

The region spanning 1-110 (ESGGGLVQPG…WGQGTTLTVS (110 aa)) is the Ig-like domain.

In Mus musculus (Mouse), this protein is Ig heavy chain V-III region HPC76.